A 526-amino-acid chain; its full sequence is Bifunctional purine biosynthesis protein PurH (526 aa).

In terms of domain architecture, MGS-like spans 1 to 147 (MSSIKRALIS…KNWKHVAIVT (147 aa)).

It belongs to the PurH family.

It catalyses the reaction (6R)-10-formyltetrahydrofolate + 5-amino-1-(5-phospho-beta-D-ribosyl)imidazole-4-carboxamide = 5-formamido-1-(5-phospho-D-ribosyl)imidazole-4-carboxamide + (6S)-5,6,7,8-tetrahydrofolate. The catalysed reaction is IMP + H2O = 5-formamido-1-(5-phospho-D-ribosyl)imidazole-4-carboxamide. It functions in the pathway purine metabolism; IMP biosynthesis via de novo pathway; 5-formamido-1-(5-phospho-D-ribosyl)imidazole-4-carboxamide from 5-amino-1-(5-phospho-D-ribosyl)imidazole-4-carboxamide (10-formyl THF route): step 1/1. The protein operates within purine metabolism; IMP biosynthesis via de novo pathway; IMP from 5-formamido-1-(5-phospho-D-ribosyl)imidazole-4-carboxamide: step 1/1. This chain is Bifunctional purine biosynthesis protein PurH, found in Neisseria meningitidis serogroup B (strain ATCC BAA-335 / MC58).